Here is a 288-residue protein sequence, read N- to C-terminus: Bis(5'-nucleosyl)-tetraphosphatase, symmetrical (288 aa).

Belongs to the Ap4A hydrolase family.

The catalysed reaction is P(1),P(4)-bis(5'-adenosyl) tetraphosphate + H2O = 2 ADP + 2 H(+). Hydrolyzes diadenosine 5',5'''-P1,P4-tetraphosphate to yield ADP. This chain is Bis(5'-nucleosyl)-tetraphosphatase, symmetrical, found in Pseudomonas putida (strain GB-1).